A 372-amino-acid chain; its full sequence is tRNA-specific 2-thiouridylase MnmA (372 aa).

Residues 7–14 (GLSGGVDS) and Met33 each bind ATP. The interaction with target base in tRNA stretch occupies residues 104–106 (NPD). Cys109 (nucleophile) is an active-site residue. A disulfide bridge connects residues Cys109 and Cys202. Gly134 lines the ATP pocket. The tract at residues 152-154 (KDQ) is interaction with tRNA. Cys202 acts as the Cysteine persulfide intermediate in catalysis. The interval 310–311 (RY) is interaction with tRNA.

This sequence belongs to the MnmA/TRMU family.

It localises to the cytoplasm. The catalysed reaction is S-sulfanyl-L-cysteinyl-[protein] + uridine(34) in tRNA + AH2 + ATP = 2-thiouridine(34) in tRNA + L-cysteinyl-[protein] + A + AMP + diphosphate + H(+). Catalyzes the 2-thiolation of uridine at the wobble position (U34) of tRNA, leading to the formation of s(2)U34. This is tRNA-specific 2-thiouridylase MnmA from Mesomycoplasma hyopneumoniae (strain 232) (Mycoplasma hyopneumoniae).